Consider the following 507-residue polypeptide: Myocyte-specific enhancer factor 2A (507 aa).

The 55-residue stretch at 3–57 (RKKIQITRIMDERNRQVTFTKRKFGLMKKAYELSVLCDCEIALIIFNSSNKLFQY) folds into the MADS-box domain. Residues 58 to 86 (ASTDMDKVLLKYTEYNEPHESGTNSDIVE) constitute a DNA-binding region (mef2-type). S59 is subject to Phosphoserine; by CK2. 2 positions are modified to phosphoserine: S98 and S235. The segment at 175–269 (ADSSMLSPPQ…GGGNLGMNSR (95 aa)) is disordered. Residues 209 to 245 (LSTSDLTVPNGAGSSPVGNGFVNSRASPNLVGTTGAN) show a composition bias toward polar residues. K249 is subject to N6-acetyllysine. Residue S255 is modified to Phosphoserine. The segment at 266-283 (MNSRKPDLRVVIPPSSKG) is required for interaction with MAPKs. The tract at residues 289 to 296 (SEEEELEL) is beta domain. Residues T312 and T319 each carry the phosphothreonine; by MAPK7 and MAPK14 modification. S355 carries the post-translational modification Phosphoserine; by MAPK7. A compositionally biased stretch (polar residues) spans 390 to 402 (SNLSINTNQNINI). Residues 390-507 (SNLSINTNQN…KRMRMDAWVT (118 aa)) form a disordered region. Position 403 is an N6-acetyllysine; alternate (K403). Residue K403 forms a Glycyl lysine isopeptide (Lys-Gly) (interchain with G-Cter in SUMO); alternate linkage. Phosphoserine; by CDK5 is present on S408. T415 carries the post-translational modification Phosphothreonine. The span at 423-443 (QPPPPSQAPQPQPPQPQPQPQ) shows a compositional bias: pro residues. A Phosphoserine modification is found at S453. Residues 453–466 (SPVDSLSSSSSSYD) are compositionally biased toward low complexity. Basic and acidic residues-rich tracts occupy residues 467 to 477 (GSDREDPRGDF) and 488 to 507 (NTED…AWVT).

This sequence belongs to the MEF2 family. Binds DNA as a homo- or heterodimer. Dimerizes with MEF2D. Interacts with HDAC7. Interacts with PIAS1; the interaction enhances sumoylation. Interacts with HDAC4, HDAC9 and SLC2A4RG. Interacts (via the N-terminal) with MAPK7; the interaction results in the phosphorylation and transcriptional activity of MEF2A. In terms of processing, constitutive phosphorylation on Ser-408 promotes Lys-403 sumoylation thus preventing acetylation at this site. Dephosphorylation on Ser-408 by PPP3CA upon neuron depolarization promotes a switch from sumoylation to acetylation on residue Lys-403 leading to inhibition of dendrite claw differentiation. Phosphorylation on Thr-312 and Thr-319 are the main sites involved in p38 MAPK signaling and activate transcription. Phosphorylated on these sites by MAPK14/p38alpha and MAPK11/p38beta, but not by MAPK13/p38delta nor by MAPK12/p38gamma. Phosphorylation on Ser-408 by CDK5 induced by neurotoxicity inhibits MEF2A transcriptional activation leading to apoptosis of cortical neurons. Phosphorylation on Thr-312, Thr-319 and Ser-355 can be induced by EGF. Sumoylation on Lys-403 is enhanced by PIAS1 and represses transcriptional activity. Phosphorylation on Ser-408 is required for sumoylation. Has no effect on nuclear location nor on DNA binding. Sumoylated with SUMO1 and, to a lesser extent with SUMO2 and SUMO3. PIASx facilitates sumoylation in postsynaptic dendrites in the cerebellar cortex and promotes their morphogenesis. Post-translationally, acetylation on Lys-403 activates transcriptional activity. Acetylated by p300 on several sites in diffentiating myocytes. Acetylation on Lys-4 increases DNA binding and transactivation. Hyperacetylation by p300 leads to enhanced cardiac myocyte growth and heart failure. In terms of processing, proteolytically cleaved on several sites by caspase 3 and caspase 7 following neurotoxicity. Preferentially cleaves the CDK5-mediated hyperphosphorylated form which leads to cortical neuron apoptosis and transcriptional inactivation.

It localises to the nucleus. Functionally, transcriptional activator which binds specifically to the MEF2 element, 5'-YTA[AT](4)TAR-3', found in numerous muscle-specific genes. Also involved in the activation of numerous growth factor- and stress-induced genes. Mediates cellular functions not only in skeletal and cardiac muscle development, but also in neuronal differentiation and survival. Plays diverse roles in the control of cell growth, survival and apoptosis via p38 MAPK signaling in muscle-specific and/or growth factor-related transcription. In cerebellar granule neurons, phosphorylated and sumoylated MEF2A represses transcription of NUR77 promoting synaptic differentiation. Associates with chromatin to the ZNF16 promoter. This is Myocyte-specific enhancer factor 2A (MEF2A) from Sus scrofa (Pig).